A 664-amino-acid polypeptide reads, in one-letter code: Cyclic nucleotide-gated channel alpha-2 (664 aa).

A compositionally biased stretch (polar residues) spans 1–11; the sequence is MTEKTNGVKSS. The segment at 1–49 is disordered; the sequence is MTEKTNGVKSSPANNHNHHAPPAIKANGKDDHRTSSRPHSAADDDTSSE. At 1–144 the chain is on the cytoplasmic side; the sequence is MTEKTNGVKS…PAGDWYYCWL (144 aa). The segment covering 12–23 has biased composition (low complexity); sequence PANNHNHHAPPA. Residues 145-166 form a helical membrane-spanning segment; sequence FVIAMPVLYNWCLLVARACFSD. Topologically, residues 167–176 are extracellular; the sequence is LQKGYYLVWL. The chain crosses the membrane as a helical span at residues 177–197; the sequence is VLDYVSDVVYIADLFIRLRTG. Over 198 to 222 the chain is Cytoplasmic; that stretch reads FLEQGLLVKDTKKLRDNYIHTLQFK. A helical transmembrane segment spans residues 223–241; the sequence is LDVASIIPTDLIYFAVDIH. The Extracellular portion of the chain corresponds to 242–246; that stretch reads SPEVR. The chain crosses the membrane as a helical span at residues 247–265; that stretch reads FNRLLHFARMFEFFDRTET. Residues 266-272 lie on the Cytoplasmic side of the membrane; the sequence is RTNYPNI. Residues 270–378 form an ion conduction pathway region; it reads PNIFRISNLV…GNVGSMISNM (109 aa). A helical membrane pass occupies residues 273–296; it reads FRISNLVLYILVIIHWNACIYYAI. Residues 297-319 lie on the Extracellular side of the membrane; it reads SKSIGFGVDTWVYPNITDPEYGY. Helical transmembrane passes span 320-354 and 355-379; these read LARE…LFVI and FDFL…SNMN. Residues 337 to 340 are selectivity filter; that stretch reads TIGE. The interval 380–456 is C-linker; it reads ATRAEFQAKI…STLKKVRIFH (77 aa). The Cytoplasmic portion of the chain corresponds to 380–664; sequence ATRAEFQAKI…SPELAAADEP (285 aa). Residues 460 to 580 are cyclic nucleotide-binding domain; it reads AGLLVELVLK…EERGREILMK (121 aa). G520, S523, R536, and T537 together coordinate 3',5'-cyclic GMP. 3',5'-cyclic AMP contacts are provided by R536 and T537. Residues 597–651 are a coiled coil; it reads VQEKLGQLETNMETLYTRFGRLLAEYTGAQQKLKQRITVLETKMKQNNEDDYLSD. Positions 641–664 are disordered; it reads KQNNEDDYLSDGMNSPELAAADEP.

The protein belongs to the cyclic nucleotide-gated cation channel (TC 1.A.1.5) family. CNGA2 subfamily. As to quaternary structure, the olfactory cyclic nucleotide-gated channel is an heterotetramer composed of CNGA2, CNGA4 and CNGB1b subunits with 2:1:1 stoichiometry.

The protein resides in the cell projection. Its subcellular location is the cilium membrane. The enzyme catalyses Ca(2+)(in) = Ca(2+)(out). It catalyses the reaction Na(+)(in) = Na(+)(out). The catalysed reaction is K(+)(in) = K(+)(out). It carries out the reaction NH4(+)(in) = NH4(+)(out). The enzyme catalyses Rb(+)(in) = Rb(+)(out). It catalyses the reaction Li(+)(in) = Li(+)(out). The catalysed reaction is Cs(+)(in) = Cs(+)(out). Functionally, pore-forming subunit of the olfactory cyclic nucleotide-gated channel. Operates in the cilia of olfactory sensory neurons where chemical stimulation of the odorant is converted to an electrical signal. Mediates odorant-induced cAMP-dependent Ca(2+) influx triggering neuron depolarization. The rise of intracellular Ca(2+) levels potentiates the olfactory response by activating Ca(2+)-dependent Cl(-) channels, but it also serves as a negative feedback signal to desensitize the channel for rapid adaptation to odorants. Conducts cAMP- and cGMP-gated ion currents, with permeability for monovalent and divalent cations. The protein is Cyclic nucleotide-gated channel alpha-2 of Homo sapiens (Human).